The following is a 421-amino-acid chain: Shaggy-related protein kinase kappa (421 aa).

A compositionally biased stretch (gly residues) spans 1–10 (MASSGLGNGV). The disordered stretch occupies residues 1–60 (MASSGLGNGVGTSRSAKGLKSSSSSVDWLTRDLAETRIRDKVETDDERDSEPDIIDGAGA). A compositionally biased stretch (basic and acidic residues) spans 29 to 42 (LTRDLAETRIRDKV). A compositionally biased stretch (acidic residues) spans 43 to 54 (ETDDERDSEPDI). Residues 83–367 (YISEHVVGTG…ALEACIHPLF (285 aa)) form the Protein kinase domain. Residues 89–97 (VGTGSFGMV) and Lys112 each bind ATP. Asp208 (proton acceptor) is an active-site residue. Tyr243 carries the post-translational modification Phosphotyrosine.

The protein belongs to the protein kinase superfamily. CMGC Ser/Thr protein kinase family. GSK-3 subfamily. In terms of processing, autophosphorylated mainly on threonine and serine residues. As to expression, expressed exclusively in inflorescences.

The catalysed reaction is L-seryl-[protein] + ATP = O-phospho-L-seryl-[protein] + ADP + H(+). It catalyses the reaction L-threonyl-[protein] + ATP = O-phospho-L-threonyl-[protein] + ADP + H(+). May mediate extracellular signals to regulate transcription in differentiating cells. The sequence is that of Shaggy-related protein kinase kappa (ASK10) from Arabidopsis thaliana (Mouse-ear cress).